The primary structure comprises 226 residues: GTP-binding nuclear protein Ran (226 aa).

In terms of domain architecture, Small GTPase Ran-type spans 3–184 (DPISFKVILV…LSILRTLLND (182 aa)). 14 to 21 (DGATGKTT) lines the GTP pocket. The interval 33–41 (KQYISTIGV) is switch-I. GTP contacts are provided by residues G70, 135–138 (NKCD), and 163–165 (SAK). The segment at 70–86 (GQEKFGGLRDGYYVDSD) is switch-II.

The protein belongs to the small GTPase superfamily. Ran family. Found in a nuclear export complex with RanGTP, exportin and pre-miRNA.

It is found in the nucleus. GTP-binding protein involved in nucleocytoplasmic transport. Required for the import of protein into the nucleus and also for RNA export. Involved in chromatin condensation and control of cell cycle. This Giardia intestinalis (Giardia lamblia) protein is GTP-binding nuclear protein Ran.